The following is an 87-amino-acid chain: Cuticle protein 1 (87 aa).

At Gln1 the chain carries Pyrrolidone carboxylic acid. 3 consecutive repeat copies span residues 5–20, 43–58, and 71–86. Cystine bridges form between Cys14–Cys20, Cys52–Cys58, and Cys80–Cys86.

The polypeptide is Cuticle protein 1 (Blaberus craniifer (Death's head cockroach)).